The following is an 82-amino-acid chain: RNA-binding protein Hfq (82 aa).

Positions 10–70 constitute a Sm domain; that stretch reads DLFLNTVRKS…ISTIMPSQPV (61 aa).

It belongs to the Hfq family. In terms of assembly, homohexamer.

Its function is as follows. RNA chaperone that binds small regulatory RNA (sRNAs) and mRNAs to facilitate mRNA translational regulation in response to envelope stress, environmental stress and changes in metabolite concentrations. Also binds with high specificity to tRNAs. The protein is RNA-binding protein Hfq of Chelativorans sp. (strain BNC1).